Reading from the N-terminus, the 292-residue chain is Ribosomal protein L11 methyltransferase (292 aa).

S-adenosyl-L-methionine-binding residues include T144, G165, D187, and N229.

The protein belongs to the methyltransferase superfamily. PrmA family.

Its subcellular location is the cytoplasm. It catalyses the reaction L-lysyl-[protein] + 3 S-adenosyl-L-methionine = N(6),N(6),N(6)-trimethyl-L-lysyl-[protein] + 3 S-adenosyl-L-homocysteine + 3 H(+). Its function is as follows. Methylates ribosomal protein L11. The chain is Ribosomal protein L11 methyltransferase from Pseudomonas syringae pv. tomato (strain ATCC BAA-871 / DC3000).